The primary structure comprises 552 residues: Sensor histidine kinase DpiB (552 aa).

Over 1–21 (MLQLNENKQFAFFQRLAFPLR) the chain is Cytoplasmic. Residues 22–42 (IFLLILVFSIFVIAALAQYFT) traverse the membrane as a helical segment. At 43–182 (ASFEDYLTLH…DSWRAEFLLP (140 aa)) the chain is on the periplasmic side. The helical transmembrane segment at 183–203 (MAGVFVVLLGILMLLSWFLAA) threads the bilayer. The Cytoplasmic portion of the chain corresponds to 204-552 (HIRRQMMGME…NDSSINPIDR (349 aa)). Residues 222–292 (RQQEALFSSV…IDEKRQDVVA (71 aa)) enclose the PAS domain. A Histidine kinase domain is found at 344-541 (TLRHEHLNWM…LFSIYIPKVK (198 aa)). Histidine 347 bears the Phosphohistidine; by autocatalysis mark.

Autophosphorylated.

The protein resides in the cell inner membrane. The catalysed reaction is ATP + protein L-histidine = ADP + protein N-phospho-L-histidine.. With respect to regulation, autophosphorylation is induced in vitro by dithiothreitol (DTT). Member of the two-component regulatory system DpiA/DpiB, which is essential for expression of citrate-specific fermentation genes and genes involved in plasmid inheritance. Could be involved in response to both the presence of citrate and external redox conditions. Functions as a sensor kinase that phosphorylates DpiA in the presence of citrate. The chain is Sensor histidine kinase DpiB (dpiB) from Escherichia coli (strain K12).